A 186-amino-acid chain; its full sequence is Proline-rich protein 3 (186 aa).

Residues 1–97 (MPKRKKQNQP…LGPRSSPYGR (97 aa)) form a disordered region. Pro residues-rich tracts occupy residues 33–44 (MGPPSLLGPPPM) and 67–79 (MIPP…PPPR). The C3H1-type zinc-finger motif lies at 153-181 (KSDRPVCRHFSKKGHCRYEDHCAFYHPGV).

The protein is Proline-rich protein 3 (Prr3) of Rattus norvegicus (Rat).